Reading from the N-terminus, the 510-residue chain is Pantetheinase (510 aa).

The signal sequence occupies residues 1–22; it reads MIMSQLLNYVAVLFFCVSRASS. One can recognise a CN hydrolase domain in the interval 31–307; the sequence is YEHAVILPNA…GKLLLAQLDS (277 aa). N-linked (GlcNAc...) asparagine glycosylation occurs at asparagine 39. The active-site Proton acceptor is glutamate 80. N-linked (GlcNAc...) asparagine glycosylation is found at asparagine 87 and asparagine 147. The active-site Proton donor is the lysine 179. Residue asparagine 201 is glycosylated (N-linked (GlcNAc...) asparagine). Cysteine 212 acts as the Nucleophile in catalysis. N-linked (GlcNAc...) asparagine glycans are attached at residues asparagine 316 and asparagine 354. The GPI-anchor amidated aspartate moiety is linked to residue aspartate 492. Positions 493-510 are cleaved as a propeptide — removed in mature form; sequence LTTQALRLNPKTDAWKSK. O-linked (GalNAc...) threonine glycosylation occurs at threonine 504.

This sequence belongs to the carbon-nitrogen hydrolase superfamily. BTD/VNN family. In terms of assembly, monomer.

Its subcellular location is the cell membrane. It catalyses the reaction (R)-pantetheine + H2O = cysteamine + (R)-pantothenate. Its function is as follows. Amidohydrolase that hydrolyzes specifically one of the carboamide linkages in D-pantetheine thus recycling pantothenic acid (vitamin B5) and releasing cysteamine. The polypeptide is Pantetheinase (VNN1) (Bos taurus (Bovine)).